The sequence spans 337 residues: Glyceraldehyde-3-phosphate dehydrogenase (337 aa).

Residues 13–14, Asp-35, and Arg-80 contribute to the NAD(+) site; that span reads RI. Residues 150–152, Thr-181, 210–211, and Arg-233 each bind D-glyceraldehyde 3-phosphate; these read SCT and TG. The active-site Nucleophile is Cys-151. Asn-315 lines the NAD(+) pocket.

Belongs to the glyceraldehyde-3-phosphate dehydrogenase family. Homotetramer.

It localises to the cytoplasm. It carries out the reaction D-glyceraldehyde 3-phosphate + phosphate + NAD(+) = (2R)-3-phospho-glyceroyl phosphate + NADH + H(+). Its pathway is carbohydrate degradation; glycolysis; pyruvate from D-glyceraldehyde 3-phosphate: step 1/5. This Colletotrichum lindemuthianum (Bean anthracnose fungus) protein is Glyceraldehyde-3-phosphate dehydrogenase (GPDA).